We begin with the raw amino-acid sequence, 921 residues long: Ribosome-releasing factor 2, mitochondrial (921 aa).

The N-terminal 55 residues, 1–55 (MVSALLLRARQNGRAARCLDYPKVKCWALASLPKSSLEKPGFSQVRRFSVFHPQS), are a transit peptide targeting the mitochondrion. The tr-type G domain maps to 60–368 (DLTRNIGIIA…SVVDLLPSPQ (309 aa)). GTP contacts are provided by residues 69 to 76 (AHIDAGKT), 152 to 156 (DTPGH), and 206 to 209 (NKMD).

This sequence belongs to the TRAFAC class translation factor GTPase superfamily. Classic translation factor GTPase family. EF-G/EF-2 subfamily.

It is found in the mitochondrion. Functionally, mitochondrial GTPase that mediates the disassembly of ribosomes from messenger RNA at the termination of mitochondrial protein biosynthesis. Not involved in the GTP-dependent ribosomal translocation step during translation elongation. This is Ribosome-releasing factor 2, mitochondrial (mef2) from Emericella nidulans (strain FGSC A4 / ATCC 38163 / CBS 112.46 / NRRL 194 / M139) (Aspergillus nidulans).